A 152-amino-acid chain; its full sequence is Large ribosomal subunit protein uL22 (152 aa).

Over residues 124-143 (APTKAASKKAAPAKQTTPAA) the composition is skewed to low complexity. The interval 124 to 152 (APTKAASKKAAPAKQTTPAATESKTEGAE) is disordered.

This sequence belongs to the universal ribosomal protein uL22 family. Part of the 50S ribosomal subunit.

Functionally, this protein binds specifically to 23S rRNA; its binding is stimulated by other ribosomal proteins, e.g. L4, L17, and L20. It is important during the early stages of 50S assembly. It makes multiple contacts with different domains of the 23S rRNA in the assembled 50S subunit and ribosome. In terms of biological role, the globular domain of the protein is located near the polypeptide exit tunnel on the outside of the subunit, while an extended beta-hairpin is found that lines the wall of the exit tunnel in the center of the 70S ribosome. This Salinispora arenicola (strain CNS-205) protein is Large ribosomal subunit protein uL22.